We begin with the raw amino-acid sequence, 337 residues long: Structural protein VP9 (337 aa).

It localises to the virion. The protein resides in the host cytoplasm. This Colorado tick fever virus (strain USA/Florio N-7180) (CTFV) protein is Structural protein VP9.